The sequence spans 568 residues: CRISPR-associated exonuclease Cas4/endonuclease Cas1 fusion (568 aa).

Positions 1–209 are CRISPR-associated exonuclease Cas4; sequence MSVVVTRYRG…KCSLAPVCLP (209 aa). Cys43 serves as a coordination point for [4Fe-4S] cluster. Residues Asp95 and Glu108 each coordinate Mn(2+). 3 residues coordinate [4Fe-4S] cluster: Cys198, Cys201, and Cys207. The tract at residues 232-568 is CRISPR-associated endonuclease Cas1; that stretch reads VLHVATPGTR…PGLFATFRLR (337 aa). Mn(2+) contacts are provided by Glu390, His459, and Glu474.

It in the N-terminal section; belongs to the CRISPR-associated exonuclease Cas4 family. This sequence in the C-terminal section; belongs to the CRISPR-associated endonuclease Cas1 family. In terms of assembly, homodimer, forms a heterotetramer with a Cas2 homodimer. Requires [4Fe-4S] cluster as cofactor. Mg(2+) is required as a cofactor. It depends on Mn(2+) as a cofactor.

It catalyses the reaction exonucleolytic cleavage in the 5'- to 3'-direction to yield nucleoside 3'-phosphates.. Its function is as follows. CRISPR (clustered regularly interspaced short palindromic repeat), is an adaptive immune system that provides protection against mobile genetic elements (viruses, transposable elements and conjugative plasmids). CRISPR clusters contain spacers, sequences complementary to antecedent mobile elements, and target invading nucleic acids. CRISPR clusters are transcribed and processed into CRISPR RNA (crRNA). The Cas4 region acts as a ssDNA exonuclease, while the Cas1 region acts as a dsDNA endonuclease. Involved in the integration of spacer DNA into the CRISPR cassette. The chain is CRISPR-associated exonuclease Cas4/endonuclease Cas1 fusion (cas4-cas1) from Myxococcus xanthus (strain DK1622).